A 210-amino-acid chain; its full sequence is Ribosomal RNA large subunit methyltransferase E (210 aa).

S-adenosyl-L-methionine-binding residues include glycine 67, tryptophan 69, aspartate 87, aspartate 103, and aspartate 128. The Proton acceptor role is filled by lysine 168.

It belongs to the class I-like SAM-binding methyltransferase superfamily. RNA methyltransferase RlmE family.

The protein localises to the cytoplasm. It carries out the reaction uridine(2552) in 23S rRNA + S-adenosyl-L-methionine = 2'-O-methyluridine(2552) in 23S rRNA + S-adenosyl-L-homocysteine + H(+). In terms of biological role, specifically methylates the uridine in position 2552 of 23S rRNA at the 2'-O position of the ribose in the fully assembled 50S ribosomal subunit. This is Ribosomal RNA large subunit methyltransferase E from Psychrobacter cryohalolentis (strain ATCC BAA-1226 / DSM 17306 / VKM B-2378 / K5).